We begin with the raw amino-acid sequence, 327 residues long: Glycerol-3-phosphate dehydrogenase [NAD(P)+] (327 aa).

Positions 11, 30, and 103 each coordinate NADPH. 3 residues coordinate sn-glycerol 3-phosphate: Lys103, Gly131, and Ser133. Position 135 (Ala135) interacts with NADPH. Residues Lys186, Asp243, Ser253, Arg254, and Asn255 each coordinate sn-glycerol 3-phosphate. The active-site Proton acceptor is Lys186. Arg254 lines the NADPH pocket. Val281 and Glu283 together coordinate NADPH.

Belongs to the NAD-dependent glycerol-3-phosphate dehydrogenase family.

The protein resides in the cytoplasm. It carries out the reaction sn-glycerol 3-phosphate + NAD(+) = dihydroxyacetone phosphate + NADH + H(+). The catalysed reaction is sn-glycerol 3-phosphate + NADP(+) = dihydroxyacetone phosphate + NADPH + H(+). The protein operates within membrane lipid metabolism; glycerophospholipid metabolism. In terms of biological role, catalyzes the reduction of the glycolytic intermediate dihydroxyacetone phosphate (DHAP) to sn-glycerol 3-phosphate (G3P), the key precursor for phospholipid synthesis. The polypeptide is Glycerol-3-phosphate dehydrogenase [NAD(P)+] (Wolbachia sp. subsp. Drosophila simulans (strain wRi)).